The primary structure comprises 107 residues: Replication initiation control protein YabA (107 aa).

Zn(2+) is bound by residues H81, C83, C97, and C100.

This sequence belongs to the YabA family. In terms of assembly, homotetramer. Interacts with both DnaA and DnaN, acting as a bridge between these two proteins. Zn(2+) is required as a cofactor.

The protein localises to the cytoplasm. Its subcellular location is the nucleoid. Functionally, involved in control of chromosome replication initiation. Inhibits the cooperative binding of DnaA to the oriC region, thus negatively regulating initiation of chromosome replication. Inhibits the ability of DnaA-ATP to form a helix on DNA; does not disassemble preformed DnaA-DNA helices. Decreases the residence time of DnaA on the chromosome at its binding sites (oriC, replication forks and promoter-binding sites). Tethers DnaA to the replication machinery via the DNA polymerase beta sliding clamp subunit (dnaN). Associates with oriC and other DnaA targets on the chromosome in a DnaA-dependent manner. The chain is Replication initiation control protein YabA from Streptococcus pyogenes serotype M3 (strain ATCC BAA-595 / MGAS315).